A 131-amino-acid chain; its full sequence is Small ribosomal subunit protein uS11 (131 aa).

It belongs to the universal ribosomal protein uS11 family. Part of the 30S ribosomal subunit. Interacts with proteins S7 and S18. Binds to IF-3.

Located on the platform of the 30S subunit, it bridges several disparate RNA helices of the 16S rRNA. Forms part of the Shine-Dalgarno cleft in the 70S ribosome. This is Small ribosomal subunit protein uS11 from Exiguobacterium sibiricum (strain DSM 17290 / CCUG 55495 / CIP 109462 / JCM 13490 / 255-15).